The sequence spans 625 residues: Probable potassium transport system protein Kup (625 aa).

12 consecutive transmembrane segments (helical) span residues 13–33 (TALA…LYAL), 53–73 (ILSI…VAIV), 103–123 (IYMI…GIIT), 141–161 (VFDP…FLVQ), 172–192 (FGPI…HSVI), 206–226 (AIQF…AVVL), 250–270 (WFFV…ALLL), 282–302 (LLVP…ATVI), 340–360 (IYVP…ILIF), 369–389 (AYGL…AVFI), 400–420 (VLLL…ATSL), and 422–442 (ILSG…ILMT).

The protein belongs to the HAK/KUP transporter (TC 2.A.72) family.

The protein resides in the cell inner membrane. The catalysed reaction is K(+)(in) + H(+)(in) = K(+)(out) + H(+)(out). Functionally, transport of potassium into the cell. Likely operates as a K(+):H(+) symporter. The chain is Probable potassium transport system protein Kup from Acinetobacter baumannii (strain ACICU).